A 415-amino-acid chain; its full sequence is Queuine tRNA-ribosyltransferase accessory subunit 2 (415 aa).

Residues cysteine 351, cysteine 353, cysteine 356, and histidine 382 each contribute to the Zn(2+) site.

Belongs to the queuine tRNA-ribosyltransferase family. QTRT2 subfamily. As to quaternary structure, heterodimer of a catalytic subunit QTRT1 and an accessory subunit QTRT2. Zn(2+) is required as a cofactor.

It localises to the cytoplasm. The protein resides in the mitochondrion outer membrane. Functionally, non-catalytic subunit of the queuine tRNA-ribosyltransferase (TGT) that catalyzes the base-exchange of a guanine (G) residue with queuine (Q) at position 34 (anticodon wobble position) in tRNAs with GU(N) anticodons (tRNA-Asp, -Asn, -His and -Tyr), resulting in the hypermodified nucleoside queuosine (7-(((4,5-cis-dihydroxy-2-cyclopenten-1-yl)amino)methyl)-7-deazaguanosine). In Homo sapiens (Human), this protein is Queuine tRNA-ribosyltransferase accessory subunit 2.